A 148-amino-acid chain; its full sequence is U2 snRNP component IST3 (148 aa).

Positions 31–109 constitute an RRM domain; it reads AYIYIGNLNR…RALKIDHTFY (79 aa).

This sequence belongs to the IST3 family. Component of the 45S U1.U2.U4/U6.U5 penta-snRNP particle, a subcomplex of the spliceosome. Belongs to the CWC complex (or CEF1-associated complex), a spliceosome sub-complex reminiscent of a late-stage spliceosome composed of the U2, U5 and U6 snRNAs and at least BUD13, BUD31, BRR2, CDC40, CEF1, CLF1, CUS1, CWC2, CWC15, CWC21, CWC22, CWC23, CWC24, CWC25, CWC27, ECM2, HSH155, IST3, ISY1, LEA1, MSL1, NTC20, PRP8, PRP9, PRP11, PRP19, PRP21, PRP22, PRP45, PRP46, SLU7, SMB1, SMD1, SMD2, SMD3, SMX2, SMX3, SNT309, SNU114, SPP2, SYF1, SYF2, RSE1 and YJU2. Belongs to the pre-mRNA retention and splicing (RES) complex composed of at least BUD13, IST3 and PML1. Subunit of the U2 snRNP. Interacts with RDS3.

Its subcellular location is the cytoplasm. It localises to the nucleus. Required for pre-mRNA splicing and spliceosome assembly. As part of the pre-mRNA retention and splicing (RES) complex, required for nuclear pre-mRNA retention and efficient splicing. Required for MER1-activated splicing. The polypeptide is U2 snRNP component IST3 (IST3) (Saccharomyces cerevisiae (strain ATCC 204508 / S288c) (Baker's yeast)).